The chain runs to 508 residues: Monocarboxylate transporter 9 (508 aa).

Residues 1–12 (MEFQKSPDGGWG) are Cytoplasmic-facing. The next 12 membrane-spanning stretches (helical) occupy residues 13-33 (WVIVVVSFFTQFLSYGSPLAV), 53-73 (WVGSLASGVGLLASPVCSLFV), 80-100 (PVTIFSGFLVAGGLMLSSLAP), 102-122 (IYFLFFSYGIVVGLGCGLLYT), 137-157 (GLALGLISTGSSVGLFIYAAL), 164-184 (FYGLDGCLLIVGALALNILAC), 303-323 (VFSALFIAILLFDIGGFPPSL), 341-361 (MPLISIFGIMTAVGKLLLGIL), 370-390 (LYLYVATLIITGLALCAIPFA), 396-416 (LAILSGILGFLTGNWSIFPYV), 431-451 (GILMFFAGLGNSLGPPIVGWF), and 460-480 (IAFYFSGFCVLLGGFILLLAI). At 481-508 (LPCWDMCNKKLPKPAVPTTFFYKVASNV) the chain is on the cytoplasmic side.

The protein belongs to the major facilitator superfamily. Monocarboxylate porter (TC 2.A.1.13) family.

It localises to the cell membrane. The enzyme catalyses creatine(in) = creatine(out). It catalyses the reaction (R)-carnitine(in) = (R)-carnitine(out). In terms of biological role, extracellular pH-and Na(+)-sensitive low-affinity creatine transporter. Also functions as a pH-independent carnitine efflux transporter. The sequence is that of Monocarboxylate transporter 9 (Slc16a9) from Mus musculus (Mouse).